Here is a 110-residue protein sequence, read N- to C-terminus: uncharacterized protein (110 aa).

To M.jannaschii MJ0123 and A.aeolicus AA15.

This is an uncharacterized protein from Methanocaldococcus jannaschii (strain ATCC 43067 / DSM 2661 / JAL-1 / JCM 10045 / NBRC 100440) (Methanococcus jannaschii).